Here is a 278-residue protein sequence, read N- to C-terminus: Probable endonuclease 4 (278 aa).

His69, His109, Glu145, Asp179, His182, His216, Asp229, His231, and Glu261 together coordinate Zn(2+).

Belongs to the AP endonuclease 2 family. Zn(2+) is required as a cofactor.

The catalysed reaction is Endonucleolytic cleavage to 5'-phosphooligonucleotide end-products.. Functionally, endonuclease IV plays a role in DNA repair. It cleaves phosphodiester bonds at apurinic or apyrimidinic (AP) sites, generating a 3'-hydroxyl group and a 5'-terminal sugar phosphate. The sequence is that of Probable endonuclease 4 from Buchnera aphidicola subsp. Baizongia pistaciae (strain Bp).